Consider the following 65-residue polypeptide: Large ribosomal subunit protein bL35 (65 aa).

A compositionally biased stretch (basic residues) spans 1–15 (MPKMKTKKSASKRFT). 2 disordered regions span residues 1–26 (MPKM…KRGQ) and 38–65 (TKNK…MPYA). A compositionally biased stretch (basic and acidic residues) spans 45-54 (RGTEGVHETN).

This sequence belongs to the bacterial ribosomal protein bL35 family.

This chain is Large ribosomal subunit protein bL35, found in Ralstonia pickettii (strain 12J).